The sequence spans 169 residues: Aspartic protease inhibitor 3 (169 aa).

N-linked (GlcNAc...) asparagine glycosylation occurs at asparagine 1. 2 cysteine pairs are disulfide-bonded: cysteine 30–cysteine 75 and cysteine 124–cysteine 134.

Belongs to the protease inhibitor I3 (leguminous Kunitz-type inhibitor) family.

The protein localises to the vacuole. Functionally, inhibitor of cathepsin D (aspartic protease). May also inhibit trypsin and chymotrypsin (serine proteases). Protects the plant by inhibiting proteases of invading organisms. The chain is Aspartic protease inhibitor 3 from Solanum tuberosum (Potato).